The primary structure comprises 520 residues: Transactivator/viroplasmin protein (520 aa).

2 disordered regions span residues 103-126 and 487-520; these read SDFL…SVAP and EDAS…KQVD.

This sequence belongs to the caulimoviridae viroplasmin family.

Its subcellular location is the host cytoplasm. In terms of biological role, enhances the ribosomal termination-reinitiation event leading to the translation of major open reading frames on the polycistronic viral RNAs. The chain is Transactivator/viroplasmin protein from Arabidopsis thaliana (Mouse-ear cress).